Consider the following 302-residue polypeptide: RNA polymerase II holoenzyme cyclin-like subunit (302 aa).

One can recognise a Cyclin N-terminal domain in the interval 53-142 (QQLIKLGKRM…LGECEFSLIS (90 aa)).

This sequence belongs to the cyclin family. Cyclin C subfamily. In terms of assembly, component of the srb8-11 complex, a regulatory module of the Mediator complex.

It is found in the nucleus. Its function is as follows. Component of the srb8-11 complex. The srb8-11 complex is a regulatory module of the Mediator complex which is itself involved in regulation of basal and activated RNA polymerase II-dependent transcription. The srb8-11 complex may be involved in the transcriptional repression of a subset of genes regulated by Mediator. It may inhibit the association of the Mediator complex with RNA polymerase II to form the holoenzyme complex. The srb8-11 complex phosphorylates the C-terminal domain (CTD) of the largest subunit of RNA polymerase II. This is RNA polymerase II holoenzyme cyclin-like subunit (ssn8) from Aspergillus fumigatus (strain ATCC MYA-4609 / CBS 101355 / FGSC A1100 / Af293) (Neosartorya fumigata).